The chain runs to 721 residues: BBSome complex member bbs-7 (721 aa).

In terms of assembly, part of BBSome complex, that contains at least bbs-1, bbs-2, bbs-4, bbs-5, osm-12, bbs-8/ttc-8 and bbs-9. Interacts with bbs-1. Expressed in ciliated cells including amphid and both inner and outer labial neurons of the head and in both phasmid neurons PHA and PHB in the tail at larval stages L1 and L2.

The protein resides in the cell projection. It localises to the cilium. The protein localises to the cytoplasm. It is found in the cytoskeleton. Its subcellular location is the cilium basal body. The protein resides in the cilium axoneme. Functionally, component of the BBSome complex. The BBSome complex is thought to function as a coat complex required for sorting of specific membrane proteins to the primary cilia. The BBSome complex is required for ciliogenesis but is dispensable for centriolar satellite function. Required for proper BBSome complex assembly and its ciliary localization. Required for cilia biogenesis and both the assembly and movement of intraflagellar transport proteins along the ciliary axoneme. Plays a role in the removal of degraded mechanosensory receptors within the cilia. Plays a role in guanylyl cyclase localization in the ring-like structures at the base of the finger compartment in AFD sensory neurons. In ciliated sensory neurons, required for the sensation of nitric oxide and avoidance of NO-producing organisms like P.aeruginosa. The polypeptide is BBSome complex member bbs-7 (Caenorhabditis elegans).